A 37-amino-acid polypeptide reads, in one-letter code: Large ribosomal subunit protein bL36A (37 aa).

Belongs to the bacterial ribosomal protein bL36 family.

The chain is Large ribosomal subunit protein bL36A from Haemophilus ducreyi (strain 35000HP / ATCC 700724).